The chain runs to 343 residues: Mediator of RNA polymerase II transcription subunit 2 (343 aa).

Disordered stretches follow at residues 105-141 and 252-277; these read KQQQ…AQQL and STNE…ISSN. Residues 107-132 show a composition bias toward basic and acidic residues; sequence QQEEEQRRKHQAELEKNKRQQEHDAA. A compositionally biased stretch (polar residues) spans 252–264; the sequence is STNEASTNNRNND.

The protein belongs to the Mediator complex subunit 2 family. As to quaternary structure, component of the Mediator complex.

Its subcellular location is the nucleus. Functionally, component of the Mediator complex, a coactivator involved in the regulated transcription of nearly all RNA polymerase II-dependent genes. Mediator functions as a bridge to convey information from gene-specific regulatory proteins to the basal RNA polymerase II transcription machinery. Mediator is recruited to promoters by direct interactions with regulatory proteins and serves as a scaffold for the assembly of a functional preinitiation complex with RNA polymerase II and the general transcription factors. The protein is Mediator of RNA polymerase II transcription subunit 2 (MED2) of Eremothecium gossypii (strain ATCC 10895 / CBS 109.51 / FGSC 9923 / NRRL Y-1056) (Yeast).